Consider the following 118-residue polypeptide: Large ribosomal subunit protein bL20 (118 aa).

This sequence belongs to the bacterial ribosomal protein bL20 family.

Functionally, binds directly to 23S ribosomal RNA and is necessary for the in vitro assembly process of the 50S ribosomal subunit. It is not involved in the protein synthesizing functions of that subunit. The chain is Large ribosomal subunit protein bL20 from Pseudomonas aeruginosa (strain LESB58).